The chain runs to 353 residues: Ferredoxin--NADP reductase 1 (353 aa).

Positions 43, 51, 56, 96, 135, 300, and 341 each coordinate FAD.

The protein belongs to the ferredoxin--NADP reductase type 2 family. Homodimer. Requires FAD as cofactor.

It catalyses the reaction 2 reduced [2Fe-2S]-[ferredoxin] + NADP(+) + H(+) = 2 oxidized [2Fe-2S]-[ferredoxin] + NADPH. The chain is Ferredoxin--NADP reductase 1 from Cupriavidus metallidurans (strain ATCC 43123 / DSM 2839 / NBRC 102507 / CH34) (Ralstonia metallidurans).